The sequence spans 473 residues: Bifunctional protein HldE (473 aa).

Residues methionine 1–serine 317 are ribokinase. An ATP-binding site is contributed by asparagine 194–glutamate 197. Aspartate 263 is a catalytic residue. Positions phenylalanine 343 to arginine 473 are cytidylyltransferase.

The protein in the N-terminal section; belongs to the carbohydrate kinase PfkB family. This sequence in the C-terminal section; belongs to the cytidylyltransferase family. Homodimer.

The enzyme catalyses D-glycero-beta-D-manno-heptose 7-phosphate + ATP = D-glycero-beta-D-manno-heptose 1,7-bisphosphate + ADP + H(+). The catalysed reaction is D-glycero-beta-D-manno-heptose 1-phosphate + ATP + H(+) = ADP-D-glycero-beta-D-manno-heptose + diphosphate. The protein operates within nucleotide-sugar biosynthesis; ADP-L-glycero-beta-D-manno-heptose biosynthesis; ADP-L-glycero-beta-D-manno-heptose from D-glycero-beta-D-manno-heptose 7-phosphate: step 1/4. It functions in the pathway nucleotide-sugar biosynthesis; ADP-L-glycero-beta-D-manno-heptose biosynthesis; ADP-L-glycero-beta-D-manno-heptose from D-glycero-beta-D-manno-heptose 7-phosphate: step 3/4. Catalyzes the phosphorylation of D-glycero-D-manno-heptose 7-phosphate at the C-1 position to selectively form D-glycero-beta-D-manno-heptose-1,7-bisphosphate. Its function is as follows. Catalyzes the ADP transfer from ATP to D-glycero-beta-D-manno-heptose 1-phosphate, yielding ADP-D-glycero-beta-D-manno-heptose. The protein is Bifunctional protein HldE of Pseudomonas aeruginosa (strain LESB58).